The chain runs to 461 residues: Putative aldehyde dehydrogenase FUS7 (461 aa).

220-225 (GSTTTG) provides a ligand contact to NAD(+). Residues Glu242 and Cys276 contribute to the active site.

The protein belongs to the aldehyde dehydrogenase family.

It carries out the reaction an aldehyde + NAD(+) + H2O = a carboxylate + NADH + 2 H(+). Functionally, putative aldehyde dehydrogenase; part of the gene cluster that mediates the biosynthesis of the mycotoxin fusarin C. Within the cluster, FUS1, FUS2, FUS8 and FUS9 are sufficient for fusarin production. The other FUS cluster members are not essential for fusarin C biosynthesis. This chain is Putative aldehyde dehydrogenase FUS7, found in Gibberella fujikuroi (strain CBS 195.34 / IMI 58289 / NRRL A-6831) (Bakanae and foot rot disease fungus).